We begin with the raw amino-acid sequence, 804 residues long: Leucine--tRNA ligase (804 aa).

The 'HIGH' region motif lies at 39–50; it reads PFPSGKGLHVGH. Residues 573 to 577 carry the 'KMSKS' region motif; sequence KMSKS. Lysine 576 is an ATP binding site.

This sequence belongs to the class-I aminoacyl-tRNA synthetase family.

Its subcellular location is the cytoplasm. The enzyme catalyses tRNA(Leu) + L-leucine + ATP = L-leucyl-tRNA(Leu) + AMP + diphosphate. This Lactobacillus gasseri (strain ATCC 33323 / DSM 20243 / BCRC 14619 / CIP 102991 / JCM 1131 / KCTC 3163 / NCIMB 11718 / NCTC 13722 / AM63) protein is Leucine--tRNA ligase.